We begin with the raw amino-acid sequence, 519 residues long: Bifunctional pantoate ligase/cytidylate kinase (519 aa).

Residues 1–282 (MNLTILRTKT…CGNTRLIDHG (282 aa)) are pantoate--beta-alanine ligase. Residue 30-37 (MGGLHQGH) coordinates ATP. Residue histidine 37 is the Proton donor of the active site. Residue glutamine 66 participates in (R)-pantoate binding. Glutamine 66 is a beta-alanine binding site. Residue 155-158 (GEKD) participates in ATP binding. Glutamine 161 lines the (R)-pantoate pocket. Residue 192–195 (CSSR) coordinates ATP. Residues 283–519 (FLMKRNPIVA…PQEVWPTNAT (237 aa)) are cytidylate kinase.

The protein in the N-terminal section; belongs to the pantothenate synthetase family. In the C-terminal section; belongs to the cytidylate kinase family. Type 1 subfamily.

The protein localises to the cytoplasm. It catalyses the reaction (R)-pantoate + beta-alanine + ATP = (R)-pantothenate + AMP + diphosphate + H(+). The catalysed reaction is CMP + ATP = CDP + ADP. It carries out the reaction dCMP + ATP = dCDP + ADP. Its pathway is cofactor biosynthesis; (R)-pantothenate biosynthesis; (R)-pantothenate from (R)-pantoate and beta-alanine: step 1/1. Its function is as follows. Catalyzes the condensation of pantoate with beta-alanine in an ATP-dependent reaction via a pantoyl-adenylate intermediate. In terms of biological role, catalyzes the transfer of a phosphate group from ATP to either CMP or dCMP to form CDP or dCDP and ADP, respectively. The protein is Bifunctional pantoate ligase/cytidylate kinase of Prochlorococcus marinus (strain SARG / CCMP1375 / SS120).